A 103-amino-acid polypeptide reads, in one-letter code: Large ribosomal subunit protein bL21 (103 aa).

Belongs to the bacterial ribosomal protein bL21 family. As to quaternary structure, part of the 50S ribosomal subunit. Contacts protein L20.

In terms of biological role, this protein binds to 23S rRNA in the presence of protein L20. In Psychrobacter sp. (strain PRwf-1), this protein is Large ribosomal subunit protein bL21.